The primary structure comprises 75 residues: Large ribosomal subunit protein bL31 (75 aa).

4 residues coordinate Zn(2+): Cys16, Cys18, Cys38, and Cys41.

The protein belongs to the bacterial ribosomal protein bL31 family. Type A subfamily. Part of the 50S ribosomal subunit. Zn(2+) is required as a cofactor.

In terms of biological role, binds the 23S rRNA. In Mycolicibacterium smegmatis (strain ATCC 700084 / mc(2)155) (Mycobacterium smegmatis), this protein is Large ribosomal subunit protein bL31.